The following is a 1006-amino-acid chain: Multiple C2 domain and transmembrane region protein 9 (1006 aa).

Residues M1 to Y108 form the C2 1 domain. Residues V135 to K156 form a disordered region. 3 C2 domains span residues R251–Y371, S411–V536, and N579–Y704. Ca(2+) is bound by residues D284, D290, D337, D339, and D344. 2 consecutive transmembrane segments (helical) span residues M842–G862 and A946–F966.

Belongs to the MCTP family. Ca(2+) is required as a cofactor. Expressed in incipient leaf primordia and roots meristems. Observed in flowers.

The protein localises to the cell membrane. The protein resides in the cytoplasm. May function as a signaling molecule by regulating the trafficking of other regulators. This chain is Multiple C2 domain and transmembrane region protein 9, found in Arabidopsis thaliana (Mouse-ear cress).